A 519-amino-acid chain; its full sequence is Spermidine/putrescine import ATP-binding protein PotA (519 aa).

Residues 6–401 enclose the ABC transporter domain; it reads LHLRDITKIY…PNSLWVANFI (396 aa). Position 39 to 46 (39 to 46) interacts with ATP; it reads GPSGCGKT. Residues 107–270 are insert; the sequence is RKPKDNVDQS…EQFENKNITR (164 aa).

Belongs to the ABC transporter superfamily. Spermidine/putrescine importer (TC 3.A.1.11.1) family. In terms of assembly, the complex is composed of two ATP-binding proteins (PotA), two transmembrane proteins (PotB and PotC) and a solute-binding protein (PotD).

The protein resides in the cell membrane. The catalysed reaction is ATP + H2O + polyamine-[polyamine-binding protein]Side 1 = ADP + phosphate + polyamineSide 2 + [polyamine-binding protein]Side 1.. In terms of biological role, part of the ABC transporter complex PotABCD involved in spermidine/putrescine import. Responsible for energy coupling to the transport system. This Ureaplasma parvum serovar 3 (strain ATCC 700970) protein is Spermidine/putrescine import ATP-binding protein PotA.